The chain runs to 627 residues: Chaperone protein DnaK (627 aa).

Threonine 197 is modified (phosphothreonine; by autocatalysis). Over residues 602-611 the composition is skewed to polar residues; sequence ENQHSEANTV. Positions 602 to 627 are disordered; the sequence is ENQHSEANTVNDEKVVDADFQDVDKK. A compositionally biased stretch (basic and acidic residues) spans 612–627; it reads NDEKVVDADFQDVDKK.

The protein belongs to the heat shock protein 70 family.

Its function is as follows. Acts as a chaperone. The protein is Chaperone protein DnaK of Rickettsia felis (strain ATCC VR-1525 / URRWXCal2) (Rickettsia azadi).